Reading from the N-terminus, the 248-residue chain is 23S rRNA (guanosine-2'-O-)-methyltransferase RlmB (248 aa).

Positions 198, 218, and 227 each coordinate S-adenosyl-L-methionine.

Belongs to the class IV-like SAM-binding methyltransferase superfamily. RNA methyltransferase TrmH family. RlmB subfamily.

It is found in the cytoplasm. The enzyme catalyses guanosine(2251) in 23S rRNA + S-adenosyl-L-methionine = 2'-O-methylguanosine(2251) in 23S rRNA + S-adenosyl-L-homocysteine + H(+). Functionally, specifically methylates the ribose of guanosine 2251 in 23S rRNA. The polypeptide is 23S rRNA (guanosine-2'-O-)-methyltransferase RlmB (Pseudomonas aeruginosa (strain ATCC 15692 / DSM 22644 / CIP 104116 / JCM 14847 / LMG 12228 / 1C / PRS 101 / PAO1)).